Here is a 259-residue protein sequence, read N- to C-terminus: 7-cyano-7-deazaguanine synthase (259 aa).

Residue 32 to 42 participates in ATP binding; sequence LSGGLDSVTCL. Positions 223, 233, 236, and 239 each coordinate Zn(2+).

The protein belongs to the QueC family. Requires Zn(2+) as cofactor.

The catalysed reaction is 7-carboxy-7-deazaguanine + NH4(+) + ATP = 7-cyano-7-deazaguanine + ADP + phosphate + H2O + H(+). Its pathway is purine metabolism; 7-cyano-7-deazaguanine biosynthesis. In terms of biological role, catalyzes the ATP-dependent conversion of 7-carboxy-7-deazaguanine (CDG) to 7-cyano-7-deazaguanine (preQ(0)). This is 7-cyano-7-deazaguanine synthase from Psychrobacter cryohalolentis (strain ATCC BAA-1226 / DSM 17306 / VKM B-2378 / K5).